Here is a 309-residue protein sequence, read N- to C-terminus: Ketosamine-3-kinase (309 aa).

Ser-20 bears the Phosphoserine mark. 89-91 (EHL) is a binding site for ATP. Asp-217 acts as the Proton acceptor in catalysis.

This sequence belongs to the fructosamine kinase family.

The catalysed reaction is N(6)-D-ribulosyl-L-lysyl-[protein] + ATP = N(6)-(3-O-phospho-D-ribulosyl)-L-lysyl-[protein] + ADP + H(+). It catalyses the reaction N(6)-(D-psicosyl)-L-lysyl-[protein] + ATP = N(6)-(3-O-phospho-D-psicosyl)-L-lysyl-[protein] + ADP + H(+). Functionally, ketosamine-3-kinase involved in protein deglycation by mediating phosphorylation of ribuloselysine and psicoselysine on glycated proteins, to generate ribuloselysine-3 phosphate and psicoselysine-3 phosphate, respectively. Ribuloselysine-3 phosphate and psicoselysine-3 phosphate adducts are unstable and decompose under physiological conditions. Not able to phosphorylate fructoselysine. In Mus musculus (Mouse), this protein is Ketosamine-3-kinase.